Consider the following 341-residue polypeptide: DNA-directed RNA polymerase subunit alpha (341 aa).

The alpha N-terminal domain (alpha-NTD) stretch occupies residues 1-233; the sequence is MIRDEIPISA…NLFIPFLHAE (233 aa). An alpha C-terminal domain (alpha-CTD) region spans residues 265–341; that stretch reads TKGVTFKHIF…NLPKNKLHFH (77 aa).

Belongs to the RNA polymerase alpha chain family. As to quaternary structure, in plastids the minimal PEP RNA polymerase catalytic core is composed of four subunits: alpha, beta, beta', and beta''. When a (nuclear-encoded) sigma factor is associated with the core the holoenzyme is formed, which can initiate transcription.

The protein localises to the plastid. The protein resides in the chloroplast. It carries out the reaction RNA(n) + a ribonucleoside 5'-triphosphate = RNA(n+1) + diphosphate. Its function is as follows. DNA-dependent RNA polymerase catalyzes the transcription of DNA into RNA using the four ribonucleoside triphosphates as substrates. This chain is DNA-directed RNA polymerase subunit alpha, found in Takakia lepidozioides (Moss).